Reading from the N-terminus, the 484-residue chain is Glycogen synthase (484 aa).

K15 is a binding site for ADP-alpha-D-glucose.

The protein belongs to the glycosyltransferase 1 family. Bacterial/plant glycogen synthase subfamily.

It carries out the reaction [(1-&gt;4)-alpha-D-glucosyl](n) + ADP-alpha-D-glucose = [(1-&gt;4)-alpha-D-glucosyl](n+1) + ADP + H(+). Its pathway is glycan biosynthesis; glycogen biosynthesis. Its function is as follows. Synthesizes alpha-1,4-glucan chains using ADP-glucose. The polypeptide is Glycogen synthase (Geotalea uraniireducens (strain Rf4) (Geobacter uraniireducens)).